A 336-amino-acid polypeptide reads, in one-letter code: Glucan endo-1,3-beta-glucosidase A (336 aa).

The signal sequence occupies residues 1 to 23 (MAFLSSLLASLLLVGLLIQITGA). A Pyrrolidone carboxylic acid modification is found at Q24. E118 (proton donor) is an active-site residue. The Nucleophile role is filled by E257.

It belongs to the glycosyl hydrolase 17 family.

It is found in the secreted. Its subcellular location is the extracellular space. It catalyses the reaction Hydrolysis of (1-&gt;3)-beta-D-glucosidic linkages in (1-&gt;3)-beta-D-glucans.. In terms of biological role, implicated in the defense of plants against pathogens. This is Glucan endo-1,3-beta-glucosidase A from Solanum lycopersicum (Tomato).